A 154-amino-acid polypeptide reads, in one-letter code: Large-conductance mechanosensitive channel (154 aa).

Transmembrane regions (helical) follow at residues 14–34 (VMDL…VTSL), 38–58 (IITP…LFIN), and 81–101 (GLFL…FIVI).

This sequence belongs to the MscL family. Homopentamer.

The protein localises to the cell membrane. In terms of biological role, channel that opens in response to stretch forces in the membrane lipid bilayer. May participate in the regulation of osmotic pressure changes within the cell. The protein is Large-conductance mechanosensitive channel of Brevibacillus brevis (strain 47 / JCM 6285 / NBRC 100599).